The chain runs to 181 residues: Protein Syd (181 aa).

It belongs to the Syd family.

It is found in the cell inner membrane. In terms of biological role, interacts with the SecY protein in vivo. May bind preferentially to an uncomplexed state of SecY, thus functioning either as a chelating agent for excess SecY in the cell or as a regulatory factor that negatively controls the translocase function. The protein is Protein Syd of Escherichia coli (strain K12 / DH10B).